The sequence spans 160 residues: Cytochrome b6-f complex subunit 4 (160 aa).

3 helical membrane-spanning segments follow: residues 36–56 (LLYIFPVCIFGTFAIVIGLSV), 95–115 (LLGVLLMAAVPAGLLTVPFIE), and 131–151 (TVFLLGTVVAVYLGIGSTFPI).

It belongs to the cytochrome b family. PetD subfamily. As to quaternary structure, the 4 large subunits of the cytochrome b6-f complex are cytochrome b6, subunit IV (17 kDa polypeptide, petD), cytochrome f and the Rieske protein, while the 4 small subunits are petG, petL, petM and petN. The complex functions as a dimer.

The protein localises to the plastid. Its subcellular location is the chloroplast thylakoid membrane. Its function is as follows. Component of the cytochrome b6-f complex, which mediates electron transfer between photosystem II (PSII) and photosystem I (PSI), cyclic electron flow around PSI, and state transitions. The chain is Cytochrome b6-f complex subunit 4 from Stigeoclonium helveticum (Green alga).